The chain runs to 287 residues: ATP synthase gamma chain (287 aa).

The protein belongs to the ATPase gamma chain family. In terms of assembly, F-type ATPases have 2 components, CF(1) - the catalytic core - and CF(0) - the membrane proton channel. CF(1) has five subunits: alpha(3), beta(3), gamma(1), delta(1), epsilon(1). CF(0) has three main subunits: a, b and c.

The protein localises to the cell inner membrane. Functionally, produces ATP from ADP in the presence of a proton gradient across the membrane. The gamma chain is believed to be important in regulating ATPase activity and the flow of protons through the CF(0) complex. The chain is ATP synthase gamma chain from Stenotrophomonas maltophilia (strain R551-3).